A 681-amino-acid chain; its full sequence is PAB-dependent poly(A)-specific ribonuclease subunit pan3-like (681 aa).

The C3H1-type zinc-finger motif lies at 9 to 38 (FSTNIPCRNEQLYGRCPYIDKGCFFQHKNQ). 2 disordered regions span residues 38 to 58 (QDNA…PQNS) and 82 to 123 (SSAS…TVSL). Over residues 41 to 50 (APASSKPPSA) the composition is skewed to low complexity. Residues 96–106 (KSYSSALSSGK) are compositionally biased toward polar residues. The residue at position 165 (Ser165) is a Phosphoserine.

Belongs to the protein kinase superfamily. PAN3 family.

Its subcellular location is the cytoplasm. In terms of biological role, regulatory subunit of the poly(A)-nuclease (PAN) deadenylation complex. This chain is PAB-dependent poly(A)-specific ribonuclease subunit pan3-like, found in Schizosaccharomyces pombe (strain 972 / ATCC 24843) (Fission yeast).